A 457-amino-acid polypeptide reads, in one-letter code: Bifunctional protein GlmU (457 aa).

Positions 1 to 229 are pyrophosphorylase; sequence MYNCAIILAA…YEEIMGVNSR (229 aa). UDP-N-acetyl-alpha-D-glucosamine-binding positions include 8–11, Lys-22, Gln-73, and 78–79; these read LAAG and GT. Asp-103 provides a ligand contact to Mg(2+). UDP-N-acetyl-alpha-D-glucosamine-binding residues include Gly-140, Glu-155, Asn-170, and Asn-227. Asn-227 contacts Mg(2+). Residues 230–250 form a linker region; the sequence is VQLSEAEIVMRKRINHKHMVN. Residues 251 to 457 are N-acetyltransferase; sequence GVTFIDCEST…WLDKKGLLKK (207 aa). 2 residues coordinate UDP-N-acetyl-alpha-D-glucosamine: Arg-332 and Lys-350. His-362 acts as the Proton acceptor in catalysis. UDP-N-acetyl-alpha-D-glucosamine-binding residues include Tyr-365 and Asn-376. Residues 385 to 386, Ala-422, and Arg-439 each bind acetyl-CoA; that span reads NY.

This sequence in the N-terminal section; belongs to the N-acetylglucosamine-1-phosphate uridyltransferase family. It in the C-terminal section; belongs to the transferase hexapeptide repeat family. Homotrimer. It depends on Mg(2+) as a cofactor.

The protein resides in the cytoplasm. The enzyme catalyses alpha-D-glucosamine 1-phosphate + acetyl-CoA = N-acetyl-alpha-D-glucosamine 1-phosphate + CoA + H(+). It carries out the reaction N-acetyl-alpha-D-glucosamine 1-phosphate + UTP + H(+) = UDP-N-acetyl-alpha-D-glucosamine + diphosphate. It functions in the pathway nucleotide-sugar biosynthesis; UDP-N-acetyl-alpha-D-glucosamine biosynthesis; N-acetyl-alpha-D-glucosamine 1-phosphate from alpha-D-glucosamine 6-phosphate (route II): step 2/2. Its pathway is nucleotide-sugar biosynthesis; UDP-N-acetyl-alpha-D-glucosamine biosynthesis; UDP-N-acetyl-alpha-D-glucosamine from N-acetyl-alpha-D-glucosamine 1-phosphate: step 1/1. It participates in bacterial outer membrane biogenesis; LPS lipid A biosynthesis. Catalyzes the last two sequential reactions in the de novo biosynthetic pathway for UDP-N-acetylglucosamine (UDP-GlcNAc). The C-terminal domain catalyzes the transfer of acetyl group from acetyl coenzyme A to glucosamine-1-phosphate (GlcN-1-P) to produce N-acetylglucosamine-1-phosphate (GlcNAc-1-P), which is converted into UDP-GlcNAc by the transfer of uridine 5-monophosphate (from uridine 5-triphosphate), a reaction catalyzed by the N-terminal domain. This Clostridium botulinum (strain Loch Maree / Type A3) protein is Bifunctional protein GlmU.